A 394-amino-acid chain; its full sequence is Elongation factor Tu (394 aa).

The tr-type G domain maps to 10–204 (KPHVNIGTIG…AVDSYIPQPV (195 aa)). Residues 19–26 (GHVDHGKT) form a G1 region. 19–26 (GHVDHGKT) contacts GTP. Residue Thr26 coordinates Mg(2+). Positions 60-64 (GITIS) are G2. The G3 stretch occupies residues 81-84 (DCPG). Residues 81-85 (DCPGH) and 136-139 (NKVD) each bind GTP. A G4 region spans residues 136–139 (NKVD). Residues 174–176 (SAL) are G5.

Belongs to the TRAFAC class translation factor GTPase superfamily. Classic translation factor GTPase family. EF-Tu/EF-1A subfamily. In terms of assembly, monomer.

The protein resides in the cytoplasm. The enzyme catalyses GTP + H2O = GDP + phosphate + H(+). Its function is as follows. GTP hydrolase that promotes the GTP-dependent binding of aminoacyl-tRNA to the A-site of ribosomes during protein biosynthesis. The polypeptide is Elongation factor Tu (Rickettsia felis (strain ATCC VR-1525 / URRWXCal2) (Rickettsia azadi)).